The following is a 412-amino-acid chain: Phosphoglycerate kinase (412 aa).

Positions 20, 21, 22, 23, 35, 36, 59, 60, 62, 63, 118, 119, 166, and 167 each coordinate (2R)-3-phosphoglycerate. G210 is a binding site for ADP. Residue G210 participates in CDP binding. AMP-binding residues include A211 and K212. ATP is bound at residue A211. Residue A211 participates in Mg(2+) binding. Residues A214 and D215 each coordinate Mg(2+). D215 is a binding site for CDP. Residue K216 coordinates AMP. K216 serves as a coordination point for ATP. G234 provides a ligand contact to ADP. G234 contacts CDP. 2 residues coordinate AMP: G235 and G308. 2 residues coordinate ATP: G235 and G308. 2 residues coordinate CDP: G333 and F338. F338 contributes to the ADP binding site. E339 contacts AMP. Positions 339, 370, and 371 each coordinate ATP. Residue D370 coordinates Mg(2+).

This sequence belongs to the phosphoglycerate kinase family. Monomer. Mg(2+) is required as a cofactor.

It is found in the cytoplasm. The enzyme catalyses (2R)-3-phosphoglycerate + ATP = (2R)-3-phospho-glyceroyl phosphate + ADP. It participates in carbohydrate degradation; glycolysis; pyruvate from D-glyceraldehyde 3-phosphate: step 2/5. Catalyzes one of the two ATP producing reactions in the glycolytic pathway via the reversible conversion of 1,3-diphosphoglycerate to 3-phosphoglycerate. In addition to its role as a glycolytic enzyme, it seems that PGK-1 acts as a polymerase alpha cofactor protein (primer recognition protein). May play a role in sperm motility. In Aplysia californica (California sea hare), this protein is Phosphoglycerate kinase (PGK).